We begin with the raw amino-acid sequence, 507 residues long: F-box only protein 31 (507 aa).

The disordered stretch occupies residues 19–42 (RQQRRGPAETAAADSEADTDPEEE). Ser33 is modified (phosphoserine). Residues 33–42 (SEADTDPEEE) show a composition bias toward acidic residues. Thr37 is modified (phosphothreonine). Residues 50–55 (RCSLLE) carry the D box motif. The region spanning 50–96 (RCSLLELPPELLVEIFASLPGTDLPSLAQVCSRFRRILHTDTIWRRR) is the F-box domain. 4 residues coordinate Zn(2+): Cys192, His200, Cys216, and His222. Phosphoserine; by ATM is present on Ser264. Residues 283–285 (DDL) carry the DDL motif motif. A disordered region spans residues 366-417 (EQEAGEGAAPPREPSAKAADGPPAKDGKEPGGGAEAAEQSASSGQGQPFVLP). The span at 400-412 (EAAEQSASSGQGQ) shows a compositional bias: low complexity. Ser448 carries the phosphoserine modification.

The protein belongs to the FBXO31 family. Part of a SCF (SKP1-cullin-F-box) protein ligase complex SCF(FBXO31) composed of CUL1, SKP1, RBX1 and FBXO31. Interacts (when phosphorylated at Ser-33) with CDC20, promoting ubiquitination by the APC/C complex. In terms of processing, phosphorylation at Ser-264 by ATM following gamma-irradiation results in its stabilization. Phosphorylation at Ser-448 in absence of stress promotes its ubiquitination and degradation by the SCF(FBXO46) complex. Phosphorylation at Ser-33 by AKT1 promotes association with CDC20 and ubiquitination by the APC/C complex. Post-translationally, ubiquitinated by the SCF(FBXO46) complex in absence of stress, promoting its degradation. Ubiquitinated by the APC/C complex following phosphorylation at Ser-33, leading to its degradation by the proteasome.

It localises to the cytoplasm. The protein resides in the cytoskeleton. Its subcellular location is the microtubule organizing center. It is found in the centrosome. It participates in protein modification; protein ubiquitination. Functionally, substrate-recognition component of the SCF(FBXO31) protein ligase complex, which specifically mediates the ubiquitination of proteins amidated at their C-terminus in response to oxidative stress, leading to their degradation by the proteasome. FBXO31 specifically recognizes and binds C-terminal peptides bearing an amide: C-terminal amidation in response to oxidative stress takes place following protein fragmentation. The SCF(FBXO31) also plays a role in G1 arrest following DNA damage by mediating ubiquitination of phosphorylated cyclin-D1 (CCND1), promoting its degradation by the proteasome, resulting in G1 arrest. The SCF(FBXO31) complex is however not a major regulator of CCND1 stability during the G1/S transition. In response to genotoxic stress, the SCF(FBXO31) complex directs ubiquitination and degradation of phosphorylated MDM2, thereby promoting p53/TP53-mediated DNA damage response. SCF(FBXO31) complex is required for genomic integrity by catalyzing ubiquitination and degradation of cyclin-A (CCNA1 and/or CCNA2) during the G1 phase. In response to genotoxic stress, the SCF(FBXO31) complex directs ubiquitination and degradation of phosphorylated FBXO46 and MAP2K6. SCF(FBXO31) complex promotes ubiquitination and degradation of CDT1 during the G2 phase to prevent re-replication. The SCF(FBXO31) complex also mediates ubiquitination and degradation of DUSP6, OGT and PARD6A. The protein is F-box only protein 31 of Mus musculus (Mouse).